We begin with the raw amino-acid sequence, 250 residues long: Probable transcriptional regulatory protein Cphamn1_0542 (250 aa).

This sequence belongs to the TACO1 family.

It localises to the cytoplasm. This is Probable transcriptional regulatory protein Cphamn1_0542 from Chlorobium phaeobacteroides (strain BS1).